The sequence spans 312 residues: Glycine--tRNA ligase alpha subunit (312 aa).

This sequence belongs to the class-II aminoacyl-tRNA synthetase family. As to quaternary structure, tetramer of two alpha and two beta subunits.

The protein localises to the cytoplasm. It carries out the reaction tRNA(Gly) + glycine + ATP = glycyl-tRNA(Gly) + AMP + diphosphate. The polypeptide is Glycine--tRNA ligase alpha subunit (Nostoc punctiforme (strain ATCC 29133 / PCC 73102)).